Reading from the N-terminus, the 87-residue chain is Bradykinin-potentiating peptide NDBP12 (87 aa).

A signal peptide spans methionine 1 to serine 22. Low complexity predominate over residues proline 64–proline 75. The interval proline 64–arginine 87 is disordered.

The protein belongs to the non-disulfide-bridged peptide (NDBP) superfamily. Long chain multifunctional peptide (group 2) family. Expressed by the venom gland.

Its subcellular location is the secreted. Functionally, inhibits angiotensin-converting enzyme (ACE), but does not serve as substrate for the enzyme. Potentiates bradykinin (BK) on the isolated guinea pig ileum as well as the isolated rat uterus for contraction. Also potentiates in vivo the depressor effect of BK on arterial blood pressure in the normotensive anesthetized rat. This is Bradykinin-potentiating peptide NDBP12 from Lychas mucronatus (Chinese swimming scorpion).